We begin with the raw amino-acid sequence, 157 residues long: SsrA-binding protein (157 aa).

A disordered region spans residues 133–157 (LHDKRESEKKRDWGREKGRLLRARG). The span at 135–151 (DKRESEKKRDWGREKGR) shows a compositional bias: basic and acidic residues.

The protein belongs to the SmpB family.

The protein resides in the cytoplasm. In terms of biological role, required for rescue of stalled ribosomes mediated by trans-translation. Binds to transfer-messenger RNA (tmRNA), required for stable association of tmRNA with ribosomes. tmRNA and SmpB together mimic tRNA shape, replacing the anticodon stem-loop with SmpB. tmRNA is encoded by the ssrA gene; the 2 termini fold to resemble tRNA(Ala) and it encodes a 'tag peptide', a short internal open reading frame. During trans-translation Ala-aminoacylated tmRNA acts like a tRNA, entering the A-site of stalled ribosomes, displacing the stalled mRNA. The ribosome then switches to translate the ORF on the tmRNA; the nascent peptide is terminated with the 'tag peptide' encoded by the tmRNA and targeted for degradation. The ribosome is freed to recommence translation, which seems to be the essential function of trans-translation. The polypeptide is SsrA-binding protein (Bradyrhizobium sp. (strain BTAi1 / ATCC BAA-1182)).